The following is a 227-amino-acid chain: dTTP/UTP pyrophosphatase (227 aa).

D98 acts as the Proton acceptor in catalysis.

This sequence belongs to the Maf family. YhdE subfamily. The cofactor is a divalent metal cation.

The protein localises to the cytoplasm. It carries out the reaction dTTP + H2O = dTMP + diphosphate + H(+). The enzyme catalyses UTP + H2O = UMP + diphosphate + H(+). Functionally, nucleoside triphosphate pyrophosphatase that hydrolyzes dTTP and UTP. May have a dual role in cell division arrest and in preventing the incorporation of modified nucleotides into cellular nucleic acids. The chain is dTTP/UTP pyrophosphatase from Bartonella quintana (strain Toulouse) (Rochalimaea quintana).